The primary structure comprises 266 residues: F-box only protein 50 (266 aa).

Over residues methionine 1 to alanine 16 the composition is skewed to basic and acidic residues. The disordered stretch occupies residues methionine 1–asparagine 53. The segment covering proline 27–proline 41 has biased composition (pro residues). Serine 31, serine 37, serine 40, and serine 43 each carry phosphoserine. Threonine 46 bears the Phosphothreonine mark. The FBA domain maps to leucine 86–leucine 264.

Strongly expressed in kidney. Weakly expressed in stomach, colon, duodenum and prostate.

The protein localises to the cytoplasm. In terms of biological role, promotes cell proliferation. In Mus musculus (Mouse), this protein is F-box only protein 50 (Nccrp1).